Consider the following 308-residue polypeptide: MAWQQLHLQCEKDNVDLAEALLLEAGALSIALDDAGDQPLFEPLPGESPLWDEVILTGLFDATTEAGTSHVIEQFSHEIAAQVQASRTWVSAVDDKDWEREWMSNYKPIECANDLWIVPNWLTPPNPEATNIIMDPGLAFGTGYHATTRLCLDWLTEQDLKDKVVIDYGCGSGILGIAALLLGARHVYAVDIDPQAVLATNQNAARNSVDNRLQAFLPEDFTIFCQQQDIPAVEVMVANILAKPLIGLAPYFATLMASKSRIVLAGLIESQTEQVTEAYQPYFALDPKHAFTAQEDQHWQRLSGTFTG.

S-adenosyl-L-methionine-binding residues include T148, G169, D191, and N239.

Belongs to the methyltransferase superfamily. PrmA family.

It localises to the cytoplasm. The enzyme catalyses L-lysyl-[protein] + 3 S-adenosyl-L-methionine = N(6),N(6),N(6)-trimethyl-L-lysyl-[protein] + 3 S-adenosyl-L-homocysteine + 3 H(+). Its function is as follows. Methylates ribosomal protein L11. The chain is Ribosomal protein L11 methyltransferase from Psychrobacter arcticus (strain DSM 17307 / VKM B-2377 / 273-4).